The sequence spans 170 residues: uncharacterized protein (170 aa).

Belongs to the mimivirus L223/L227/L812 family.

This is an uncharacterized protein from Acanthamoeba polyphaga mimivirus (APMV).